The chain runs to 1396 residues: DNA-directed RNA polymerase subunit beta' (1396 aa).

Zn(2+) contacts are provided by Cys70, Cys72, Cys85, and Cys88. The Mg(2+) site is built by Asp460, Asp462, and Asp464. The Zn(2+) site is built by Cys814, Cys889, Cys896, and Cys899.

This sequence belongs to the RNA polymerase beta' chain family. As to quaternary structure, the RNAP catalytic core consists of 2 alpha, 1 beta, 1 beta' and 1 omega subunit. When a sigma factor is associated with the core the holoenzyme is formed, which can initiate transcription. Requires Mg(2+) as cofactor. Zn(2+) is required as a cofactor.

It catalyses the reaction RNA(n) + a ribonucleoside 5'-triphosphate = RNA(n+1) + diphosphate. Its function is as follows. DNA-dependent RNA polymerase catalyzes the transcription of DNA into RNA using the four ribonucleoside triphosphates as substrates. This chain is DNA-directed RNA polymerase subunit beta', found in Hahella chejuensis (strain KCTC 2396).